A 259-amino-acid polypeptide reads, in one-letter code: L-cysteine S-thiosulfotransferase subunit SoxA (259 aa).

The signal sequence occupies residues 1 to 23 (MRKLWFLPILLGAVGGVSLYAIA). In terms of domain architecture, Cytochrome c spans 50 to 135 (VYAEQGRDMF…SIATYVATLS (86 aa)). Heme c is bound by residues C70, C73, H74, C108, C171, C174, and H175. R216 is a binding site for substrate. C220 serves as a coordination point for heme c. C220 acts as the Cysteine persulfide intermediate in catalysis.

This sequence belongs to the SoxA family. In terms of assembly, heterodimer of SoxA and SoxX. The cofactor is heme c. Cysteine persulfide at Cys-220.

It is found in the periplasm. The catalysed reaction is L-cysteinyl-[SoxY protein] + thiosulfate + 2 Fe(III)-[cytochrome c] = S-sulfosulfanyl-L-cysteinyl-[SoxY protein] + 2 Fe(II)-[cytochrome c] + 2 H(+). The enzyme catalyses S-sulfanyl-L-cysteinyl-[SoxY protein] + thiosulfate + 2 Fe(III)-[cytochrome c] = S-(2-sulfodisulfanyl)-L-cysteinyl-[SoxY protein] + 2 Fe(II)-[cytochrome c] + 2 H(+). C-type diheme cytochrome, which is part of the SoxAX cytochrome complex involved in sulfur oxidation. The SoxAX complex catalyzes the formation of a heterodisulfide bond between the conserved cysteine residue on a sulfur carrier SoxYZ complex subunit SoxY and thiosulfate or other inorganic sulfur substrates. This leads to the liberation of two electrons, which may be transferred from the SoxAX complex to another cytochrome c that then channels them into the respiratory electron transport chain. Some electrons may be used for reductive CO(2) fixation. The protein is L-cysteine S-thiosulfotransferase subunit SoxA of Hydrogenobacter thermophilus (strain DSM 6534 / IAM 12695 / TK-6).